We begin with the raw amino-acid sequence, 408 residues long: CCA-adding enzyme (408 aa).

ATP-binding residues include G8 and R11. Residues G8 and R11 each coordinate CTP. Residues E21 and D23 each coordinate Mg(2+). ATP-binding residues include R91, R137, and R140. Residues R91, R137, and R140 each coordinate CTP. The HD domain maps to 226 to 329 (TGYYTMTTLS…MTLFHVFDCW (104 aa)).

This sequence belongs to the tRNA nucleotidyltransferase/poly(A) polymerase family. Bacterial CCA-adding enzyme type 2 subfamily. The cofactor is Mg(2+).

The enzyme catalyses a tRNA precursor + 2 CTP + ATP = a tRNA with a 3' CCA end + 3 diphosphate. The catalysed reaction is a tRNA with a 3' CCA end + 2 CTP + ATP = a tRNA with a 3' CCACCA end + 3 diphosphate. Functionally, catalyzes the addition and repair of the essential 3'-terminal CCA sequence in tRNAs without using a nucleic acid template. Adds these three nucleotides in the order of C, C, and A to the tRNA nucleotide-73, using CTP and ATP as substrates and producing inorganic pyrophosphate. tRNA 3'-terminal CCA addition is required both for tRNA processing and repair. Also involved in tRNA surveillance by mediating tandem CCA addition to generate a CCACCA at the 3' terminus of unstable tRNAs. While stable tRNAs receive only 3'-terminal CCA, unstable tRNAs are marked with CCACCA and rapidly degraded. This Blochmanniella pennsylvanica (strain BPEN) protein is CCA-adding enzyme.